The primary structure comprises 23 residues: Cytochrome c oxidase subunit 7A-liver, mitochondrial (23 aa).

The protein belongs to the cytochrome c oxidase VIIa family. As to quaternary structure, component of the cytochrome c oxidase (complex IV, CIV), a multisubunit enzyme composed of 14 subunits. The complex is composed of a catalytic core of 3 subunits MT-CO1, MT-CO2 and MT-CO3, encoded in the mitochondrial DNA, and 11 supernumerary subunits COX4I, COX5A, COX5B, COX6A, COX6B, COX6C, COX7A, COX7B, COX7C, COX8 and NDUFA4, which are encoded in the nuclear genome. The complex exists as a monomer or a dimer and forms supercomplexes (SCs) in the inner mitochondrial membrane with NADH-ubiquinone oxidoreductase (complex I, CI) and ubiquinol-cytochrome c oxidoreductase (cytochrome b-c1 complex, complex III, CIII), resulting in different assemblies (supercomplex SCI(1)III(2)IV(1) and megacomplex MCI(2)III(2)IV(2)).

The protein resides in the mitochondrion inner membrane. Its pathway is energy metabolism; oxidative phosphorylation. Functionally, component of the cytochrome c oxidase, the last enzyme in the mitochondrial electron transport chain which drives oxidative phosphorylation. The respiratory chain contains 3 multisubunit complexes succinate dehydrogenase (complex II, CII), ubiquinol-cytochrome c oxidoreductase (cytochrome b-c1 complex, complex III, CIII) and cytochrome c oxidase (complex IV, CIV), that cooperate to transfer electrons derived from NADH and succinate to molecular oxygen, creating an electrochemical gradient over the inner membrane that drives transmembrane transport and the ATP synthase. Cytochrome c oxidase is the component of the respiratory chain that catalyzes the reduction of oxygen to water. Electrons originating from reduced cytochrome c in the intermembrane space (IMS) are transferred via the dinuclear copper A center (CU(A)) of subunit 2 and heme A of subunit 1 to the active site in subunit 1, a binuclear center (BNC) formed by heme A3 and copper B (CU(B)). The BNC reduces molecular oxygen to 2 water molecules using 4 electrons from cytochrome c in the IMS and 4 protons from the mitochondrial matrix. The polypeptide is Cytochrome c oxidase subunit 7A-liver, mitochondrial (Oncorhynchus mykiss (Rainbow trout)).